A 118-amino-acid chain; its full sequence is Myotrophin (118 aa).

Cys-2 is subject to N-acetylcysteine. An ANK 1 repeat occupies 2-30 (CDKEFMWALKNGDLDEVKDYVAKGEDVNR). 3 positions are modified to N6-acetyllysine: Lys-4, Lys-11, and Lys-24. The residue at position 31 (Thr-31) is a Phosphothreonine. ANK repeat units follow at residues 34-66 (GGRKPLHYAADCGQLEILEFLLLKGADINAPDK) and 67-99 (HHITPLLSAVYEGHVSCVKLLLSKGADKTVKGP).

Belongs to the myotrophin family. As to quaternary structure, interacts with RELA. Interacts with the heterodimer formed by CAPZA1 and CAPZB.

The protein localises to the cytoplasm. Its subcellular location is the nucleus. It is found in the perinuclear region. In terms of biological role, promotes dimerization of NF-kappa-B subunits and regulates NF-kappa-B transcription factor activity. Promotes growth of cardiomyocytes, but not cardiomyocyte proliferation. Promotes cardiac muscle hypertrophy. Plays a role in the regulation of the growth of actin filaments. Inhibits the activity of the F-actin-capping protein complex formed by the CAPZA1 and CAPZB heterodimer. The sequence is that of Myotrophin (MTPN) from Bos taurus (Bovine).